A 206-amino-acid chain; its full sequence is Superoxide dismutase [Mn] (206 aa).

H27, H82, D168, and H172 together coordinate Mn(2+).

It belongs to the iron/manganese superoxide dismutase family. Mn(2+) serves as cofactor.

The enzyme catalyses 2 superoxide + 2 H(+) = H2O2 + O2. Functionally, destroys superoxide anion radicals which are normally produced within the cells and which are toxic to biological systems. This is Superoxide dismutase [Mn] (sodA) from Lactococcus lactis subsp. lactis (strain IL1403) (Streptococcus lactis).